Here is a 151-residue protein sequence, read N- to C-terminus: Putative calcium-binding protein CML23 (151 aa).

EF-hand domains are found at residues 2-37, 39-74, 84-119, and 120-151; these read VASDEFRRVFGSFDQDGDGKISATELRLCVKASLGE, MPDEEVQALMALADTDGDGLLDEEEFVRLVTEMEAD, ETCRCLREAFAMYEMEGRGCITPLSLKLMLSKLGTH, and LDVAECQAMICRFDMNGDGVLTFDEFKTMMMA. Residues aspartate 15, aspartate 17, aspartate 19, lysine 21, glutamate 26, aspartate 52, aspartate 54, aspartate 56, and glutamate 63 each coordinate Ca(2+). Ca(2+) contacts are provided by aspartate 133, asparagine 135, aspartate 137, and glutamate 144.

Functionally, potential calcium sensor. This Oryza sativa subsp. japonica (Rice) protein is Putative calcium-binding protein CML23 (CML23).